Here is a 409-residue protein sequence, read N- to C-terminus: Phosphatidylserine decarboxylase proenzyme, mitochondrial (409 aa).

Residues 1–52 (MAASVCRPYVRSLPGVMPWRSSSCHYEYTAMHHFLGSFQKLPFEPFNTGARK) constitute a mitochondrion transit peptide. At 53 to 63 (IHTAPVRSLFL) the chain is on the mitochondrial matrix side. The chain crosses the membrane as a helical span at residues 64 to 82 (LRPVPILLATGGGYAGYRQ). The Mitochondrial intermembrane portion of the chain corresponds to 83–409 (YEKYRDQKLE…IRFGEALGSL (327 aa)). Residues Asp191, His267, and Ser378 each act as charge relay system; for autoendoproteolytic cleavage activity in the active site. Ser378 (schiff-base intermediate with substrate; via pyruvic acid; for decarboxylase activity) is an active-site residue. Pyruvic acid (Ser); by autocatalysis is present on Ser378.

It belongs to the phosphatidylserine decarboxylase family. PSD-B subfamily. Eukaryotic type I sub-subfamily. Heterodimer of a large membrane-associated beta subunit and a small pyruvoyl-containing alpha subunit. Requires pyruvate as cofactor. In terms of processing, is synthesized initially as an inactive proenzyme. Formation of the active enzyme involves a self-maturation process in which the active site pyruvoyl group is generated from an internal serine residue via an autocatalytic post-translational modification. Two non-identical subunits are generated from the proenzyme in this reaction, and the pyruvate is formed at the N-terminus of the alpha chain, which is derived from the carboxyl end of the proenzyme. The autoendoproteolytic cleavage occurs by a canonical serine protease mechanism, in which the side chain hydroxyl group of the serine supplies its oxygen atom to form the C-terminus of the beta chain, while the remainder of the serine residue undergoes an oxidative deamination to produce ammonia and the pyruvoyl prosthetic group on the alpha chain. During this reaction, the Ser that is part of the protease active site of the proenzyme becomes the pyruvoyl prosthetic group, which constitutes an essential element of the active site of the mature decarboxylase.

The protein resides in the mitochondrion inner membrane. It localises to the cytoplasm. Its subcellular location is the lipid droplet. It catalyses the reaction a 1,2-diacyl-sn-glycero-3-phospho-L-serine + H(+) = a 1,2-diacyl-sn-glycero-3-phosphoethanolamine + CO2. It participates in phospholipid metabolism; phosphatidylethanolamine biosynthesis. Functionally, catalyzes the formation of phosphatidylethanolamine (PtdEtn) from phosphatidylserine (PtdSer). Plays a central role in phospholipid metabolism and in the interorganelle trafficking of phosphatidylserine. May be involved in lipid droplet biogenesis at the endoplasmic reticulum membrane. This Cricetulus griseus (Chinese hamster) protein is Phosphatidylserine decarboxylase proenzyme, mitochondrial.